The primary structure comprises 160 residues: CST complex subunit STN1 (160 aa).

Residues 41–133 (VEIVGTIVSR…QITANVAVAE (93 aa)) constitute a DNA-binding region (OB).

Belongs to the STN1 family. In terms of assembly, component of the CST complex, composed of CTC1, TEN1 and STN1. Interacts with CTC1. Interacts with TEN1. Interacts with POT1A. In vitro interaction with TEN1 and POT1A is mutually exclusive, indicating that POT1A and TEN1 may compete for the same binding site. As to expression, widely expressed.

Its subcellular location is the nucleus. The protein localises to the chromosome. It is found in the telomere. Functionally, component of the CST complex, a complex that binds to single-stranded DNA and is required to protect telomeres from DNA degradation. The CST complex binds single-stranded DNA with high affinity in a sequence-independent manner, while isolated subunits bind DNA with low affinity by themselves. Associates with enzymatically active telomerase. Plays a genomewide role in DNA replication and facilitates re-replication at non-telomeric loci. This Arabidopsis thaliana (Mouse-ear cress) protein is CST complex subunit STN1.